We begin with the raw amino-acid sequence, 93 residues long: WAP four-disulfide core domain protein 13 (93 aa).

The first 22 residues, 1 to 22 (MKPVLPLQFLVVFCLALQLVPG), serve as a signal peptide directing secretion. In terms of domain architecture, WAP; atypical spans 24 to 73 (PKQRVLKYILEPPPCISAPENCTHLCTMQEDCEKGFQCCSSFCGIVCSSE). Cystine bridges form between C45–C66, C49–C61, and C55–C70.

Its subcellular location is the secreted. Putative acid-stable proteinase inhibitor. The protein is WAP four-disulfide core domain protein 13 (WFDC13) of Homo sapiens (Human).